Here is a 248-residue protein sequence, read N- to C-terminus: ATP synthase subunit a, chloroplastic (248 aa).

5 helical membrane passes run 38-58 (QVLITSWVVIAILLGSAAIAV), 96-116 (VPFIGTLFLFIFVSNWSGALL), 135-155 (INTTVALALLTSVAYFYAGLT), 200-220 (LVVVVLVSLVPLVIPIPVMFL), and 221-241 (GLFTSGIQALIFATLAAAYIG).

This sequence belongs to the ATPase A chain family. In terms of assembly, F-type ATPases have 2 components, CF(1) - the catalytic core - and CF(0) - the membrane proton channel. CF(1) has five subunits: alpha(3), beta(3), gamma(1), delta(1), epsilon(1). CF(0) has four main subunits: a, b, b' and c.

It localises to the plastid. It is found in the chloroplast thylakoid membrane. Functionally, key component of the proton channel; it plays a direct role in the translocation of protons across the membrane. The sequence is that of ATP synthase subunit a, chloroplastic from Nuphar advena (Common spatterdock).